Here is a 410-residue protein sequence, read N- to C-terminus: 2-oxoglutarate-dependent dioxygenase AOP3 (410 aa).

The region spanning 258 to 355 is the Fe2OG dioxygenase domain; sequence GNASVGAKEA…RYAAALFSNP (98 aa). 3 residues coordinate Fe cation: His-278, Asp-280, and His-335. Arg-346 serves as a coordination point for 2-oxoglutarate.

This sequence belongs to the iron/ascorbate-dependent oxidoreductase family. Fe(2+) is required as a cofactor.

2-oxoglutarate-dependent dioxygenase involved in glucosinolates biosynthesis. Catalyzes the conversion of methylsulfinylalkyl glucosinolates to hydroxyalkyl glucosinolates. The sequence is that of 2-oxoglutarate-dependent dioxygenase AOP3 (AOP3) from Arabidopsis thaliana (Mouse-ear cress).